The chain runs to 434 residues: Eukaryotic translation initiation factor 3 subunit E (434 aa).

One can recognise a PCI domain in the interval 219 to 392 (FFNHPKGRDL…GHVVMGTQPL (174 aa)).

The protein belongs to the eIF-3 subunit E family. Component of the eukaryotic translation initiation factor 3 (eIF-3) complex. The eIF-3 complex interacts with pix. Interacts with mxt.

It localises to the cytoplasm. Its function is as follows. Component of the eukaryotic translation initiation factor 3 (eIF-3) complex, which is involved in protein synthesis of a specialized repertoire of mRNAs and, together with other initiation factors, stimulates binding of mRNA and methionyl-tRNAi to the 40S ribosome. The eIF-3 complex specifically targets and initiates translation of a subset of mRNAs involved in cell proliferation. This is Eukaryotic translation initiation factor 3 subunit E (eIF3-S6) from Drosophila ananassae (Fruit fly).